The following is a 256-amino-acid chain: N-acetylglucosaminyldiphosphoundecaprenol N-acetyl-beta-D-mannosaminyltransferase (256 aa).

Belongs to the glycosyltransferase 26 family. TagA/TarA subfamily.

It carries out the reaction UDP-N-acetyl-alpha-D-mannosamine + N-acetyl-alpha-D-glucosaminyl-di-trans,octa-cis-undecaprenyl diphosphate = N-acetyl-beta-D-mannosaminyl-(1-&gt;4)-N-acetyl-alpha-D-glucosaminyl di-trans,octa-cis-undecaprenyl diphosphate + UDP + H(+). The protein operates within cell wall biogenesis; poly(glycerol phosphate) teichoic acid biosynthesis. Catalyzes the conversion of GlcNAc-PP-undecaprenol into ManNAc-GlcNAc-PP-undecaprenol, the first committed lipid intermediate in the de novo synthesis of teichoic acid. In Bacillus subtilis (strain 168), this protein is N-acetylglucosaminyldiphosphoundecaprenol N-acetyl-beta-D-mannosaminyltransferase.